The sequence spans 346 residues: uncharacterized protein (346 aa).

It belongs to the Gfo/Idh/MocA family.

This is an uncharacterized protein from Escherichia coli (strain K12).